A 513-amino-acid chain; its full sequence is ATP synthase subunit alpha 2 (513 aa).

169 to 176 lines the ATP pocket; the sequence is GDRQCGKT.

Belongs to the ATPase alpha/beta chains family. As to quaternary structure, F-type ATPases have 2 components, CF(1) - the catalytic core - and CF(0) - the membrane proton channel. CF(1) has five subunits: alpha(3), beta(3), gamma(1), delta(1), epsilon(1). CF(0) has three main subunits: a(1), b(2) and c(9-12). The alpha and beta chains form an alternating ring which encloses part of the gamma chain. CF(1) is attached to CF(0) by a central stalk formed by the gamma and epsilon chains, while a peripheral stalk is formed by the delta and b chains.

It is found in the cell inner membrane. The catalysed reaction is ATP + H2O + 4 H(+)(in) = ADP + phosphate + 5 H(+)(out). Its function is as follows. Produces ATP from ADP in the presence of a proton gradient across the membrane. The alpha chain is a regulatory subunit. In Paraburkholderia xenovorans (strain LB400), this protein is ATP synthase subunit alpha 2.